A 365-amino-acid polypeptide reads, in one-letter code: Chorismate synthase (365 aa).

Arg47 contributes to the NADP(+) binding site. FMN contacts are provided by residues 124–126, Gly287, 302–306, and Arg328; these read RAS and KPTAT.

This sequence belongs to the chorismate synthase family. As to quaternary structure, homotetramer. FMNH2 serves as cofactor.

The enzyme catalyses 5-O-(1-carboxyvinyl)-3-phosphoshikimate = chorismate + phosphate. It functions in the pathway metabolic intermediate biosynthesis; chorismate biosynthesis; chorismate from D-erythrose 4-phosphate and phosphoenolpyruvate: step 7/7. Functionally, catalyzes the anti-1,4-elimination of the C-3 phosphate and the C-6 proR hydrogen from 5-enolpyruvylshikimate-3-phosphate (EPSP) to yield chorismate, which is the branch point compound that serves as the starting substrate for the three terminal pathways of aromatic amino acid biosynthesis. This reaction introduces a second double bond into the aromatic ring system. This chain is Chorismate synthase, found in Prochlorococcus marinus (strain AS9601).